Reading from the N-terminus, the 255-residue chain is Pyridoxine 5'-phosphate synthase (255 aa).

Asparagine 6 serves as a coordination point for 3-amino-2-oxopropyl phosphate. Residue 8–9 (DH) coordinates 1-deoxy-D-xylulose 5-phosphate. Arginine 17 contacts 3-amino-2-oxopropyl phosphate. Histidine 41 serves as the catalytic Proton acceptor. 1-deoxy-D-xylulose 5-phosphate is bound by residues arginine 43 and histidine 48. The active-site Proton acceptor is the glutamate 68. 1-deoxy-D-xylulose 5-phosphate is bound at residue threonine 96. Histidine 208 serves as the catalytic Proton donor. 3-amino-2-oxopropyl phosphate-binding positions include glycine 209 and 230–231 (GQ).

This sequence belongs to the PNP synthase family. In terms of assembly, homooctamer; tetramer of dimers.

Its subcellular location is the cytoplasm. It catalyses the reaction 3-amino-2-oxopropyl phosphate + 1-deoxy-D-xylulose 5-phosphate = pyridoxine 5'-phosphate + phosphate + 2 H2O + H(+). The protein operates within cofactor biosynthesis; pyridoxine 5'-phosphate biosynthesis; pyridoxine 5'-phosphate from D-erythrose 4-phosphate: step 5/5. Its function is as follows. Catalyzes the complicated ring closure reaction between the two acyclic compounds 1-deoxy-D-xylulose-5-phosphate (DXP) and 3-amino-2-oxopropyl phosphate (1-amino-acetone-3-phosphate or AAP) to form pyridoxine 5'-phosphate (PNP) and inorganic phosphate. The protein is Pyridoxine 5'-phosphate synthase of Campylobacter lari (strain RM2100 / D67 / ATCC BAA-1060).